A 174-amino-acid polypeptide reads, in one-letter code: uncharacterized protein (174 aa).

Composition is skewed to basic and acidic residues over residues 1–31 (MDKH…GKEG) and 52–67 (EPPR…ERRS). The disordered stretch occupies residues 1–69 (MDKHGVKTPL…GEGRERRSVS (69 aa)).

This is an uncharacterized protein from Homo sapiens (Human).